Here is a 252-residue protein sequence, read N- to C-terminus: Tumor necrosis factor ligand superfamily member 15 (252 aa).

Topologically, residues 1-39 (MAEELGLGFGEAVPVEMLPEGCRHRREARTGLAARSKAC) are cytoplasmic. A helical; Signal-anchor for type II membrane protein transmembrane segment spans residues 40-60 (LALTCCLLSFPILAGLSTLLM). Residues 61–252 (TGQLRIPGKD…DKTFFGAFLI (192 aa)) lie on the Extracellular side of the membrane. A THD domain is found at 96-252 (PKAHLTIMRQ…DKTFFGAFLI (157 aa)). Asn-134 is a glycosylation site (N-linked (GlcNAc...) asparagine). A disulfide bridge connects residues Cys-163 and Cys-203. Asn-230 carries N-linked (GlcNAc...) asparagine glycosylation.

Belongs to the tumor necrosis factor family. Homotrimer.

Its subcellular location is the membrane. Functionally, receptor for TNFRSF25 and TNFRSF6B. Mediates activation of NF-kappa-B. Inhibits vascular endothelial growth and angiogenesis (in vitro). Promotes activation of caspases and apoptosis. Promotes splenocyte alloactivation. In Rattus norvegicus (Rat), this protein is Tumor necrosis factor ligand superfamily member 15 (Tnfsf15).